Reading from the N-terminus, the 419-residue chain is Transcription termination factor Rho (419 aa).

In terms of domain architecture, Rho RNA-BD spans E48–R123. RNA-binding regions lie at residues G61–R66, D78–Y80, and E108–Y110. ATP-binding positions include G169–G174, K181–I186, and R212. The RNA-binding 2 stretch occupies residues V284–G288.

The protein belongs to the Rho family. Homohexamer. The homohexamer assembles into an open ring structure.

Facilitates transcription termination by a mechanism that involves Rho binding to the nascent RNA, activation of Rho's RNA-dependent ATPase activity, and release of the mRNA from the DNA template. The protein is Transcription termination factor Rho of Pseudomonas aeruginosa (strain ATCC 15692 / DSM 22644 / CIP 104116 / JCM 14847 / LMG 12228 / 1C / PRS 101 / PAO1).